The sequence spans 113 residues: Integration host factor subunit alpha (113 aa).

Disordered regions lie at residues 59–80 (GNFQ…GETI) and 94–113 (QKLK…ASAE). The span at 104 to 113 (NSPPDPASAE) shows a compositional bias: pro residues.

Belongs to the bacterial histone-like protein family. In terms of assembly, heterodimer of an alpha and a beta chain.

Functionally, this protein is one of the two subunits of integration host factor, a specific DNA-binding protein that functions in genetic recombination as well as in transcriptional and translational control. The protein is Integration host factor subunit alpha of Bordetella pertussis (strain Tohama I / ATCC BAA-589 / NCTC 13251).